Here is a 389-residue protein sequence, read N- to C-terminus: Probable acyl-CoA dehydrogenase fadE25 (389 aa).

It belongs to the acyl-CoA dehydrogenase family. Requires FAD as cofactor.

It catalyses the reaction a 2,3-saturated acyl-CoA + A = a 2,3-dehydroacyl-CoA + AH2. This is Probable acyl-CoA dehydrogenase fadE25 (fadE25) from Mycobacterium bovis (strain ATCC BAA-935 / AF2122/97).